The following is a 92-amino-acid chain: Acylphosphatase (92 aa).

The Acylphosphatase-like domain occupies 4 to 92 (AVQLDVFGRV…SACHKFSVVG (89 aa)). Catalysis depends on residues Arg19 and Asn37.

Belongs to the acylphosphatase family.

The enzyme catalyses an acyl phosphate + H2O = a carboxylate + phosphate + H(+). The polypeptide is Acylphosphatase (acyP) (Latilactobacillus sakei subsp. sakei (strain 23K) (Lactobacillus sakei subsp. sakei)).